The chain runs to 119 residues: Ribosome-binding factor A (119 aa).

This sequence belongs to the RbfA family. Monomer. Binds 30S ribosomal subunits, but not 50S ribosomal subunits or 70S ribosomes.

It is found in the cytoplasm. In terms of biological role, one of several proteins that assist in the late maturation steps of the functional core of the 30S ribosomal subunit. Associates with free 30S ribosomal subunits (but not with 30S subunits that are part of 70S ribosomes or polysomes). Required for efficient processing of 16S rRNA. May interact with the 5'-terminal helix region of 16S rRNA. This is Ribosome-binding factor A from Pelodictyon phaeoclathratiforme (strain DSM 5477 / BU-1).